The sequence spans 210 residues: T-cell surface glycoprotein CD8 beta chain (210 aa).

Residues 1–21 (MQPGLWLLLATQLAALRGSSV) form the signal peptide. Residues 22–132 (LQQAPGSVMV…ELTFGKGTRL (111 aa)) enclose the Ig-like V-type domain. Residues 22 to 170 (LQQAPGSVMV…VTQKGPSCGL (149 aa)) lie on the Extracellular side of the membrane. Cysteine 41 and cysteine 116 are disulfide-bonded. N-linked (GlcNAc...) asparagine glycosylation occurs at asparagine 102. The interval 139 to 161 (PTNSQPTKKPTPRKKMCRPPSPV) is disordered. Residues 171–191 (LTLGLLVAGVLVLLVSLGVAI) traverse the membrane as a helical segment. Topologically, residues 192–210 (HLYRLKRRARLRLLKQFYK) are cytoplasmic.

Forms disulfide-linked heterodimers with CD8A at the cell surface. Interacts with CD3D; this interaction couples TCR-CD3 with CD8. Interacts with LCK. Post-translationally, phosphorylated as a consequence of T-cell activation. Palmitoylated at the cytoplasmic tail and thereby targets the heterodimer CD8A/CD8B to lipid rafts unlike CD8A homodimers.

Its subcellular location is the cell membrane. Functionally, integral membrane glycoprotein that plays an essential role in the immune response and serves multiple functions in responses against both external and internal offenses. In T-cells, functions primarily as a coreceptor for MHC class I molecule:peptide complex. The antigens presented by class I peptides are derived from cytosolic proteins while class II derived from extracellular proteins. Interacts simultaneously with the T-cell receptor (TCR) and the MHC class I proteins presented by antigen presenting cells (APCs). In turn, recruits the Src kinase LCK to the vicinity of the TCR-CD3 complex. A palmitoylation site in the cytoplasmic tail of CD8B chain contributes to partitioning of CD8 into the plasma membrane lipid rafts where signaling proteins are enriched. Once LCK recruited, it initiates different intracellular signaling pathways by phosphorylating various substrates ultimately leading to lymphokine production, motility, adhesion and activation of cytotoxic T-lymphocytes (CTLs). Additionally, plays a critical role in thymic selection of CD8+ T-cells. The chain is T-cell surface glycoprotein CD8 beta chain (CD8B) from Felis catus (Cat).